The following is a 459-amino-acid chain: Probable Delta(5) fatty acid desaturase C (459 aa).

Positions 9–87 (KKLYSWKEIS…LKQYEIGQVS (79 aa)) constitute a Cytochrome b5 heme-binding domain. The heme site is built by H45 and H68. 2 helical membrane-spanning segments follow: residues 121–141 (FAFGIIARLIFVYWFLITSYY) and 151–171 (FYLNCLLAIVYSLSNSLFSLH). The Histidine box-1 motif lies at 174-178 (HDACH). A helical transmembrane segment spans residues 187-207 (VWKWLGATYDLFIGASFFYWC). Residues 210–215 (HVIGHH) carry the Histidine box-2 motif. 2 helical membrane-spanning segments follow: residues 289 to 309 (FEIISFIIGKLVFIVFRFIIP) and 315 to 335 (LVNLLTYFFIAEFFFGLYLSF). The Histidine box-3 motif lies at 394-398 (QVVHH).

This sequence belongs to the fatty acid desaturase type 1 family. Requires Fe cation as cofactor.

The protein localises to the membrane. This is Probable Delta(5) fatty acid desaturase C from Dictyostelium discoideum (Social amoeba).